Reading from the N-terminus, the 101-residue chain is Urease subunit beta (101 aa).

The protein belongs to the urease beta subunit family. Heterotrimer of UreA (gamma), UreB (beta) and UreC (alpha) subunits. Three heterotrimers associate to form the active enzyme.

It is found in the cytoplasm. It carries out the reaction urea + 2 H2O + H(+) = hydrogencarbonate + 2 NH4(+). It functions in the pathway nitrogen metabolism; urea degradation; CO(2) and NH(3) from urea (urease route): step 1/1. The protein is Urease subunit beta of Ruegeria sp. (strain TM1040) (Silicibacter sp.).